The chain runs to 385 residues: Eukaryotic translation initiation factor 3 subunit M (385 aa).

Positions 180–342 (NSELASKVMI…RKVHISSTMH (163 aa)) constitute a PCI domain.

It belongs to the eIF-3 subunit M family. Component of the eukaryotic translation initiation factor 3 (eIF-3) complex.

It is found in the cytoplasm. Component of the eukaryotic translation initiation factor 3 (eIF-3) complex, which is involved in protein synthesis of a specialized repertoire of mRNAs and, together with other initiation factors, stimulates binding of mRNA and methionyl-tRNAi to the 40S ribosome. The eIF-3 complex specifically targets and initiates translation of a subset of mRNAs involved in cell proliferation. The chain is Eukaryotic translation initiation factor 3 subunit M from Anopheles gambiae (African malaria mosquito).